The following is a 236-amino-acid chain: Ribose-5-phosphate isomerase A (236 aa).

Residues 29-32, 86-89, and 99-102 contribute to the substrate site; these read SGST, DGAD, and KGGG. Glutamate 108 serves as the catalytic Proton acceptor. Position 126 (lysine 126) interacts with substrate.

It belongs to the ribose 5-phosphate isomerase family. In terms of assembly, homodimer.

The catalysed reaction is aldehydo-D-ribose 5-phosphate = D-ribulose 5-phosphate. It functions in the pathway carbohydrate degradation; pentose phosphate pathway; D-ribose 5-phosphate from D-ribulose 5-phosphate (non-oxidative stage): step 1/1. Catalyzes the reversible conversion of ribose-5-phosphate to ribulose 5-phosphate. In Prochlorococcus marinus (strain NATL1A), this protein is Ribose-5-phosphate isomerase A.